A 614-amino-acid polypeptide reads, in one-letter code: Ankyrin repeat domain-containing protein 55 (614 aa).

The interval 1-20 (MMRQATMDFSTPSVFDQQRG) is disordered. A compositionally biased stretch (polar residues) spans 7–16 (MDFSTPSVFD). 9 ANK repeats span residues 26-55 (VDLT…SILE), 60-89 (EGCT…NINM), 93-125 (YGRT…IPDK), 126-157 (NGRL…EINH), 161-190 (EGMT…DPTL), 194-223 (DFKT…GPSI), 230-260 (SGKT…NLQA), 264-293 (DDRT…DSNL), and 297-326 (NEST…TEPT). 4 disordered regions span residues 319 to 339 (QESR…PQKK), 354 to 375 (KKEE…EEDT), 454 to 476 (TSHA…SRSE), and 564 to 614 (RNNL…SDEN). Residues 354 to 373 (KKEEQRAHQKDPSRDRYREE) show a composition bias toward basic and acidic residues. Position 475 is a phosphoserine (S475).

This chain is Ankyrin repeat domain-containing protein 55 (ANKRD55), found in Homo sapiens (Human).